Here is a 441-residue protein sequence, read N- to C-terminus: Growth/differentiation factor 9 (441 aa).

The signal sequence occupies residues 1-29; the sequence is MALPSNFLLGVCCFAWLCFLSSLSSQAST. A propeptide spanning residues 30–306 is cleaved from the precursor; sequence EESQSGASEN…EVERSPRRRR (277 aa). Residues Asn163, Asn229, Asn258, and Asn325 are each glycosylated (N-linked (GlcNAc...) asparagine). 3 disulfide bridges follow: Cys340–Cys406, Cys369–Cys438, and Cys373–Cys440.

Belongs to the TGF-beta family. As to quaternary structure, homodimer or heterodimer (Potential). But, in contrast to other members of this family, cannot be disulfide-linked. Post-translationally, phosphorylated; phosphorylation is critical for GDF9 function. Ovary. Strongly expressed in germinal vesicle (GV) stage oocytes, MII-stage oocytes and in zygotes.

The protein resides in the secreted. Its function is as follows. Required for ovarian folliculogenesis. The chain is Growth/differentiation factor 9 (Gdf9) from Mus musculus (Mouse).